A 373-amino-acid chain; its full sequence is Dual-specificity RNA methyltransferase RlmN (373 aa).

The active-site Proton acceptor is Glu94. One can recognise a Radical SAM core domain in the interval 100–339 (EDDRATLCVS…VIVRKTRGDD (240 aa)). Cysteines 107 and 344 form a disulfide. Residues Cys114, Cys118, and Cys121 each coordinate [4Fe-4S] cluster. Residues 168–169 (GE), Ser200, 222–224 (SIH), and Asn301 contribute to the S-adenosyl-L-methionine site. Catalysis depends on Cys344, which acts as the S-methylcysteine intermediate.

This sequence belongs to the radical SAM superfamily. RlmN family. [4Fe-4S] cluster is required as a cofactor.

It localises to the cytoplasm. It carries out the reaction adenosine(2503) in 23S rRNA + 2 reduced [2Fe-2S]-[ferredoxin] + 2 S-adenosyl-L-methionine = 2-methyladenosine(2503) in 23S rRNA + 5'-deoxyadenosine + L-methionine + 2 oxidized [2Fe-2S]-[ferredoxin] + S-adenosyl-L-homocysteine. The catalysed reaction is adenosine(37) in tRNA + 2 reduced [2Fe-2S]-[ferredoxin] + 2 S-adenosyl-L-methionine = 2-methyladenosine(37) in tRNA + 5'-deoxyadenosine + L-methionine + 2 oxidized [2Fe-2S]-[ferredoxin] + S-adenosyl-L-homocysteine. In terms of biological role, specifically methylates position 2 of adenine 2503 in 23S rRNA and position 2 of adenine 37 in tRNAs. m2A2503 modification seems to play a crucial role in the proofreading step occurring at the peptidyl transferase center and thus would serve to optimize ribosomal fidelity. This Shewanella denitrificans (strain OS217 / ATCC BAA-1090 / DSM 15013) protein is Dual-specificity RNA methyltransferase RlmN.